We begin with the raw amino-acid sequence, 373 residues long: P2Y purinoceptor 1 (373 aa).

The Extracellular portion of the chain corresponds to 1–51 (MTEVPWSAVPNGTDAAFLAGLGSLWGNSTIASTAAVSSSFRCALIKTGFQF). 2 N-linked (GlcNAc...) asparagine glycosylation sites follow: Asn11 and Asn27. 2 disulfide bridges follow: Cys42–Cys296 and Cys124–Cys202. Lys46 is a binding site for ADP. Residues 52–74 (YYLPAVYILVFIIGFLGNSVAIW) traverse the membrane as a helical segment. The Cytoplasmic segment spans residues 75 to 87 (MFVFHMKPWSGIS). The helical transmembrane segment at 88–109 (VYMFNLALADFLYVLTLPALIF) threads the bilayer. At 110 to 125 (YYFNKTDWIFGDVMCK) the chain is on the extracellular side. N-linked (GlcNAc...) asparagine glycosylation is present at Asn113. The helical transmembrane segment at 126–147 (LQRFIFHVNLYGSILFLTCISA) threads the bilayer. The Cytoplasmic portion of the chain corresponds to 148–166 (HRYSGVVYPLKSLGRLKKK). A helical transmembrane segment spans residues 167-188 (NAIYVSVLVWLIVVVAISPILF). Residues 189–214 (YSGTGIRKNKTVTCYDSTSDEYLRSY) lie on the Extracellular side of the membrane. A glycan (N-linked (GlcNAc...) asparagine) is linked at Asn197. An ADP-binding site is contributed by 203 to 205 (YDS). Residues 215–237 (FIYSMCTTVAMFCIPLVLILGCY) traverse the membrane as a helical segment. The Cytoplasmic segment spans residues 238 to 260 (GLIVRALIYKDLDNSPLRRKSIY). A helical transmembrane segment spans residues 261–284 (LVIIVLTVFAVSYIPFHVMKTMNL). ADP-binding positions include 283-287 (NLRAR), 303-306 (YATY), and Arg310. Residues 285–303 (RARLDFQTPEMCDFNDRVY) are Extracellular-facing. The chain crosses the membrane as a helical span at residues 304 to 325 (ATYQVTRGLASLNSCVDPILYF). Residues 326-373 (LAGDTFRRRLSRATRKASRRSEANLQSKSEEMTLNILSEFKQNGDTSL) lie on the Cytoplasmic side of the membrane.

It belongs to the G-protein coupled receptor 1 family. In terms of tissue distribution, expressed in muscle, heart, liver, kidney, lung, brain, spleen, but not in testis.

The protein localises to the cell membrane. Receptor for extracellular adenine nucleotides such as ADP. In platelets, binding to ADP leads to mobilization of intracellular calcium ions via activation of phospholipase C, a change in platelet shape, and ultimately platelet aggregation. In Rattus norvegicus (Rat), this protein is P2Y purinoceptor 1 (P2ry1).